Here is a 102-residue protein sequence, read N- to C-terminus: MVRYCVRSLSERSHEVYGQQLRGQEQGHHGQEEQGLSPEDVEVYERTHGHSHYRRRHCSRRRLHRIHRQQHRSCGRRRRRSCRQRRRHRRGCRTRRRRCRRH.

Phosphoserine is present on residues Ser8, Ser10, and Ser37. Residues 16 to 102 are disordered; that stretch reads VYGQQLRGQE…RTRRRRCRRH (87 aa). Basic residues predominate over residues 49–102; that stretch reads GHSHYRRRHCSRRRLHRIHRQQHRSCGRRRRRSCRQRRRHRRGCRTRRRRCRRH.

This sequence belongs to the protamine P2 family. As to quaternary structure, interacts with TDRP. Proteolytic processing into mature chains is required for histone eviction during spermatogenesis. Transition proteins (TNP1 and TNP2) are required for processing. Testis.

The protein localises to the nucleus. It localises to the chromosome. Protamines substitute for histones in the chromatin of sperm during the haploid phase of spermatogenesis. They compact sperm DNA into a highly condensed, stable and inactive complex. This chain is Protamine-2 (PRM2), found in Hylobates lar (Lar gibbon).